Here is a 192-residue protein sequence, read N- to C-terminus: UPF0301 protein Bphyt_0868 (192 aa).

Belongs to the UPF0301 (AlgH) family.

In Paraburkholderia phytofirmans (strain DSM 17436 / LMG 22146 / PsJN) (Burkholderia phytofirmans), this protein is UPF0301 protein Bphyt_0868.